The chain runs to 767 residues: Lysyl oxidase homolog 2 (767 aa).

Positions 1-19 (MLVTHIFLLTLSLSVPTLG) are cleaved as a signal peptide. SRCR domains are found at residues 51 to 152 (VRLA…VQCS), 181 to 295 (IRAI…VSCT), 319 to 418 (VRLR…VRCN), and 428 to 537 (VRLS…VSCV). Intrachain disulfides connect C77-C141, C90-C151, C121-C131, C211-C284, C224-C294, C258-C268, C344-C407, C357-C417, and C388-C398. N-linked (GlcNAc...) asparagine glycosylation occurs at N281. N448 carries an N-linked (GlcNAc...) asparagine glycan. Cystine bridges form between C457/C523, C470/C536, and C504/C514. The interval 541–744 (PDLVLNAALV…WMYNCHIGGS (204 aa)) is lysyl-oxidase like. Residues D542 and L543 each contribute to the Ca(2+) site. Cystine bridges form between C566/C618, C572/C688, C650/C666, and C656/C678. Residues H619, H621, and H623 each contribute to the Cu cation site. A glycan (N-linked (GlcNAc...) asparagine) is linked at N637. Positions 646–682 (KASFCLEDSECETDVQKQYACANFGEQGITVGCWDVY) form a cross-link, lysine tyrosylquinone (Lys-Tyr). Y682 is subject to 2',4',5'-topaquinone. The Ca(2+) site is built by E715, D717, N720, and N721. C725 and C739 are oxidised to a cystine.

Belongs to the lysyl oxidase family. Cu cation serves as cofactor. It depends on lysine tyrosylquinone residue as a cofactor. In terms of processing, the lysine tyrosylquinone cross-link (LTQ) is generated by condensation of the epsilon-amino group of a lysine with a topaquinone produced by oxidation of tyrosine.

The protein resides in the secreted. Its subcellular location is the extracellular space. The protein localises to the extracellular matrix. It localises to the basement membrane. It is found in the nucleus. The protein resides in the chromosome. Its subcellular location is the endoplasmic reticulum. The enzyme catalyses L-lysyl-[protein] + O2 + H2O = (S)-2-amino-6-oxohexanoyl-[protein] + H2O2 + NH4(+). In terms of biological role, mediates the post-translational oxidative deamination of lysine residues on target proteins leading to the formation of deaminated lysine (allysine). Acts as a transcription corepressor and specifically mediates deamination of trimethylated 'Lys-4' of histone H3 (H3K4me3), a specific tag for epigenetic transcriptional activation. Shows no activity against histone H3 when it is trimethylated on 'Lys-9' (H3K9me3) or 'Lys-27' (H3K27me3) or when 'Lys-4' is monomethylated (H3K4me1) or dimethylated (H3K4me2). Also mediates deamination of methylated TAF10, a member of the transcription factor IID (TFIID) complex, which induces release of TAF10 from promoters, leading to inhibition of TFIID-dependent transcription. LOXL2-mediated deamination of TAF10 results in transcriptional repression of genes required for embryonic stem cell pluripotency. Involved in epithelial to mesenchymal transition (EMT) and participates in repression of E-cadherin, probably by mediating deamination of histone H3. When secreted into the extracellular matrix, promotes cross-linking of extracellular matrix proteins by mediating oxidative deamination of peptidyl lysine residues in precursors to fibrous collagen and elastin. Acts as a regulator of sprouting angiogenesis, probably via collagen IV scaffolding. Acts as a regulator of chondrocyte differentiation, probably by regulating expression of factors that control chondrocyte differentiation. This is Lysyl oxidase homolog 2 (loxl2) from Xenopus tropicalis (Western clawed frog).